Reading from the N-terminus, the 364-residue chain is DNA replication and repair protein RecF (364 aa).

ATP is bound at residue Gly-30–Thr-37.

This sequence belongs to the RecF family.

The protein resides in the cytoplasm. The RecF protein is involved in DNA metabolism; it is required for DNA replication and normal SOS inducibility. RecF binds preferentially to single-stranded, linear DNA. It also seems to bind ATP. In Porphyromonas gingivalis (strain ATCC BAA-308 / W83), this protein is DNA replication and repair protein RecF.